We begin with the raw amino-acid sequence, 115 residues long: MLLLRWPTFCCLWVFGLGQLEQTELSVTRETDESAQISCIVSLPYFSNTAIHWYRQKAKKFEYLIYVSTNYNQRPLGGKNKKIEASKDFQTSTSTLKINYLKKEDEATYYCAVWI.

The signal sequence occupies residues Met1–Gly18. The interval Gln19 to Ile115 is v segment.

This Mus musculus (Mouse) protein is T-cell receptor gamma chain V region V108B (Tcrg-V1).